The chain runs to 519 residues: Putative cytochrome P450 CYP13A10 (519 aa).

A helical membrane pass occupies residues 3–23; sequence VILLAIPTLFIGFISYYLWIW. C465 is a binding site for heme.

This sequence belongs to the cytochrome P450 family. The cofactor is heme.

It localises to the membrane. Its function is as follows. Cytochromes P450 are a group of heme-thiolate monooxygenases. They oxidize a variety of structurally unrelated compounds, including steroids, fatty acids, and xenobiotics. This is Putative cytochrome P450 CYP13A10 (cyp-13A10) from Caenorhabditis elegans.